The primary structure comprises 243 residues: MIIDIITIFPNFFDQFLTTSKIKHAIEDKRVEINIHDLRLYTDLKGGKIDDTPYGGGAGMLMIYPPFHKLINKLKTKDTYTVLLSPQGNVFNQQVATKWRDEIKHLILICGHYEGIDDRIQNLIDEEISIGDYVLTGGEIPAMVITDSITRLIPGVINEASYMEDTHQQGLLKYPQYTKPDEYLGMSVPDILKSGHHEKIRLWRLEKSLEKTYLKRPDLLVNRDLTKEESKILSKIKKNLESQ.

Residues Gly-111 and 130-135 (IGDYVL) contribute to the S-adenosyl-L-methionine site.

It belongs to the RNA methyltransferase TrmD family. In terms of assembly, homodimer.

It localises to the cytoplasm. It catalyses the reaction guanosine(37) in tRNA + S-adenosyl-L-methionine = N(1)-methylguanosine(37) in tRNA + S-adenosyl-L-homocysteine + H(+). Its function is as follows. Specifically methylates guanosine-37 in various tRNAs. The protein is tRNA (guanine-N(1)-)-methyltransferase of Acholeplasma laidlawii (strain PG-8A).